The primary structure comprises 736 residues: NADPH--cytochrome P450 reductase (736 aa).

Position 1 (methionine 1) is a topological domain, lumenal. A helical transmembrane segment spans residues 2–24; it reads AVSSSSDVIVLSVGIILAALYLF. The Cytoplasmic segment spans residues 25-736; it reads REQIFSAAKP…RNRLLLDVWS (712 aa). Positions 66–216 constitute a Flavodoxin-like domain; sequence IVIFYGSQTG…DYLEWKDGMW (151 aa). Residues 72–77, 123–126, 165–174, and aspartate 200 each bind FMN; these read SQTGTA, ATYG, and LGNKTYEHYN. One can recognise an FAD-binding FR-type domain in the interval 269-546; the sequence is KNPYPAPIIA…EGPRGAYKQG (278 aa). Arginine 289 provides a ligand contact to NADP(+). FAD is bound by residues 456–459, 474–476, tyrosine 480, and 495–498; these read RYYS, TVV, and GVGS. Residues threonine 577, 648 to 649, and 659 to 663 contribute to the NADP(+) site; these read SR and KIYVQ. Tryptophan 735 provides a ligand contact to FAD.

Belongs to the NADPH--cytochrome P450 reductase family. This sequence in the N-terminal section; belongs to the flavodoxin family. It in the C-terminal section; belongs to the flavoprotein pyridine nucleotide cytochrome reductase family. FAD is required as a cofactor. FMN serves as cofactor.

It localises to the endoplasmic reticulum membrane. It is found in the mitochondrion outer membrane. The protein localises to the cell membrane. The enzyme catalyses 2 oxidized [cytochrome P450] + NADPH = 2 reduced [cytochrome P450] + NADP(+) + H(+). Functionally, this enzyme is required for electron transfer from NADP to cytochrome P450 in microsomes. It can also provide electron transfer to heme oxygenase and cytochrome B5. Involved in ergosterol biosynthesis. In Phanerodontia chrysosporium (White-rot fungus), this protein is NADPH--cytochrome P450 reductase (CPR).